We begin with the raw amino-acid sequence, 296 residues long: Glutamate 5-kinase (296 aa).

Lysine 15 lines the ATP pocket. Residues serine 55, aspartate 159, and asparagine 186 each contribute to the substrate site. Residues 206–207 and 248–254 each bind ATP; these read SD and TGGIATK.

This sequence belongs to the glutamate 5-kinase family.

It localises to the cytoplasm. It catalyses the reaction L-glutamate + ATP = L-glutamyl 5-phosphate + ADP. Its pathway is amino-acid biosynthesis; L-proline biosynthesis; L-glutamate 5-semialdehyde from L-glutamate: step 1/2. In terms of biological role, catalyzes the transfer of a phosphate group to glutamate to form L-glutamate 5-phosphate. In Treponema pallidum (strain Nichols), this protein is Glutamate 5-kinase.